The chain runs to 223 residues: ATP-dependent dethiobiotin synthetase BioD (223 aa).

Residue 11–16 (DIGKTY) participates in ATP binding. A Mg(2+)-binding site is contributed by threonine 15. Residue lysine 36 is part of the active site. Threonine 40 contributes to the substrate binding site. ATP is bound by residues aspartate 50, 110-113 (EGAG), and 174-175 (NN). Aspartate 50 and glutamate 110 together coordinate Mg(2+).

This sequence belongs to the dethiobiotin synthetase family. In terms of assembly, homodimer. The cofactor is Mg(2+).

The protein resides in the cytoplasm. It carries out the reaction (7R,8S)-7,8-diammoniononanoate + CO2 + ATP = (4R,5S)-dethiobiotin + ADP + phosphate + 3 H(+). Its pathway is cofactor biosynthesis; biotin biosynthesis; biotin from 7,8-diaminononanoate: step 1/2. Functionally, catalyzes a mechanistically unusual reaction, the ATP-dependent insertion of CO2 between the N7 and N8 nitrogen atoms of 7,8-diaminopelargonic acid (DAPA, also called 7,8-diammoniononanoate) to form a ureido ring. The sequence is that of ATP-dependent dethiobiotin synthetase BioD from Staphylococcus epidermidis (strain ATCC 35984 / DSM 28319 / BCRC 17069 / CCUG 31568 / BM 3577 / RP62A).